Reading from the N-terminus, the 647-residue chain is Nucleoside triphosphatase I (647 aa).

Residues 48-213 (FIGLSELNSL…KYLINLLRPK (166 aa)) enclose the Helicase ATP-binding domain. 61 to 68 (WDTGYGKT) is an ATP binding site. The DEXH box signature appears at 150 to 153 (DEVH). One can recognise a Helicase C-terminal domain in the interval 377 to 540 (YIEACKIILN…KINVLNSFMK (164 aa)). A binding to the cap-specific mRNA (nucleoside-2'-O-)-methyltransferase region spans residues 466–532 (DIIILDLPWK…DLIKSKQDKI (67 aa)).

Belongs to the helicase family. NPH I subfamily. As to quaternary structure, monomer. Interacts (via C-terminus) with RAP94 (via N-terminus). Interacts with the cap-specific mRNA (nucleoside-2'-O-)-methyltransferase.

The protein localises to the virion. It carries out the reaction a ribonucleoside 5'-triphosphate + H2O = a ribonucleoside 5'-diphosphate + phosphate + H(+). In terms of biological role, DNA-dependent ATPase required for providing the needed energy to achieve the termination of early transcripts. Acts in concert with the RAP94 subunit of the virion RNA polymerase and the capping enzyme/VTF to catalyze release of UUUUUNU-containing nascent RNA from the elongation complex. NPH-I must bind ssDNA in order to exhibit ATPase activity. This is Nucleoside triphosphatase I (NPH1) from Melanoplus sanguinipes entomopoxvirus (MsEPV).